Here is a 173-residue protein sequence, read N- to C-terminus: Archaemetzincin (173 aa).

H130 contacts Zn(2+). The active-site Proton acceptor is E131. Zn(2+)-binding residues include H134, H140, C141, C146, C165, and C168.

Belongs to the peptidase M54 family. In terms of assembly, monomer. Zn(2+) serves as cofactor.

In terms of biological role, probable zinc metalloprotease whose natural substrate is unknown. The protein is Archaemetzincin of Natronomonas pharaonis (strain ATCC 35678 / DSM 2160 / CIP 103997 / JCM 8858 / NBRC 14720 / NCIMB 2260 / Gabara) (Halobacterium pharaonis).